A 131-amino-acid polypeptide reads, in one-letter code: D-ribose pyranase (131 aa).

H20 acts as the Proton donor in catalysis. Residues D28, H98, and 120-122 (YAN) each bind substrate.

The protein belongs to the RbsD / FucU family. RbsD subfamily. In terms of assembly, homodecamer.

It localises to the cytoplasm. It catalyses the reaction beta-D-ribopyranose = beta-D-ribofuranose. It participates in carbohydrate metabolism; D-ribose degradation; D-ribose 5-phosphate from beta-D-ribopyranose: step 1/2. In terms of biological role, catalyzes the interconversion of beta-pyran and beta-furan forms of D-ribose. This is D-ribose pyranase from Clostridium novyi (strain NT).